The sequence spans 27 residues: Conotoxin (27 aa).

3 disulfide bridges follow: Cys-2/Cys-16, Cys-6/Cys-18, and Cys-12/Cys-23. Asn-27 carries the asparagine amide modification.

In terms of tissue distribution, expressed by the venom duct.

The protein localises to the secreted. Probable neurotoxin that inhibits ion channels. This chain is Conotoxin, found in Conus amadis (Amadis cone).